Here is a 557-residue protein sequence, read N- to C-terminus: Probable tRNA-splicing endonuclease subunit tsp-5 (557 aa).

5 disordered regions span residues M1–E36, K131–L152, S225–D252, P370–P403, and S514–N557. A compositionally biased stretch (basic and acidic residues) spans K131–A140. Residues P370 to A381 are compositionally biased toward low complexity. Composition is skewed to gly residues over residues P517–K527 and G538–G549.

The protein belongs to the SEN54 family. TRNA splicing endonuclease is a heterotetramer composed of tsp-2/sen2, tsp-1/sen15, tsp-4/sen34 and tsp-5/sen54. Interacts directly with tsp-2/sen2.

Non-catalytic subunit of the tRNA-splicing endonuclease complex, a complex responsible for identification and cleavage of the splice sites in pre-tRNA. It cleaves pre-tRNA at the 5' and 3' splice sites to release the intron. The products are an intron and two tRNA half-molecules bearing 2',3' cyclic phosphate and 5'-OH termini. There are no conserved sequences at the splice sites, but the intron is invariably located at the same site in the gene, placing the splice sites an invariant distance from the constant structural features of the tRNA body. May be required to embody the molecular ruler of the complex. This is Probable tRNA-splicing endonuclease subunit tsp-5 (tsp-5) from Neurospora crassa (strain ATCC 24698 / 74-OR23-1A / CBS 708.71 / DSM 1257 / FGSC 987).